Consider the following 436-residue polypeptide: MSWSLQPPSFLLCCLLLLFSPTGLAYVATRDNCCILDERFGSFCPTTCGIADFLSSYQTDVDNDLRTLEDILFRAENRTTEAKELIKAIQVYYNPDQPPKPGMIDSATQKSKKMVEEIVKYEALLLTHETSIRYLQEIYNSNNQKITNLKQKVAQLEAQCQEPCKDSVQIHDTTGKDCQEIANKGAKESGLYFIRPLKAKQQFLVYCEIDGSGNGWTVLQKRIDGSLDFKKNWIQYKEGFGHLSPTGTTEFWLGNEKIHLISMQSTIPYALRIQLKDWNGRTSTADYAMFRVGPESDKYRLTYAYFIGGDAGDAFDGYDFGDDPSDKFFTSHNGMQFSTWDNDNDKFEGNCAEQDGSGWWMNKCHAGHLNGVYHQGGTYSKSSTTNGFDDGIIWATWKSRWYSMKETTMKIIPFNRLSIGEGQQHHMGGSKQAGDV.

The signal sequence occupies residues 1–25 (MSWSLQPPSFLLCCLLLLFSPTGLA). N77 carries N-linked (GlcNAc...) asparagine glycosylation. Residues 169–415 (QIHDTTGKDC…ETTMKIIPFN (247 aa)) form the Fibrinogen C-terminal domain. A disulfide bond links C178 and C207. Ca(2+) contacts are provided by D343, D345, and G349. C351 and C364 are disulfide-bonded. Q423 participates in a covalent cross-link: Isoglutamyl lysine isopeptide (Gln-Lys) (interchain with K-431). The residue at position 430 (S430) is a Phosphoserine. Residue K431 forms an Isoglutamyl lysine isopeptide (Lys-Gln) (interchain with Q-423) linkage.

In terms of assembly, heterohexamer; disulfide linked. Contains 2 sets of 3 non-identical chains (alpha, beta and gamma). The 2 heterotrimers are in head to head conformation with the N-termini in a small central domain. Conversion of fibrinogen to fibrin is triggered by thrombin, which cleaves fibrinopeptides A and B from alpha and beta chains, and thus exposes the N-terminal polymerization sites responsible for the formation of the soft clot. The soft clot is converted into the hard clot by factor XIIIA which catalyzes the epsilon-(gamma-glutamyl)lysine cross-linking between gamma chains (stronger) and between alpha chains (weaker) of different monomers.

The protein resides in the secreted. In terms of biological role, together with fibrinogen alpha (FGA) and fibrinogen beta (FGB), polymerizes to form an insoluble fibrin matrix. Fibrin has a major function in hemostasis as one of the primary components of blood clots. In addition, functions during the early stages of wound repair to stabilize the lesion and guide cell migration during re-epithelialization. Was originally thought to be essential for platelet aggregation, based on in vitro studies using anticoagulated blood. However, subsequent studies have shown that it is not absolutely required for thrombus formation in vivo. Enhances expression of SELP in activated platelets via an ITGB3-dependent pathway. Maternal fibrinogen is essential for successful pregnancy. Fibrin deposition is also associated with infection, where it protects against IFNG-mediated hemorrhage. May also facilitate the immune response via both innate and T-cell mediated pathways. The sequence is that of Fibrinogen gamma chain (Fgg) from Mus musculus (Mouse).